We begin with the raw amino-acid sequence, 227 residues long: Ubiquitin carboxyl-terminal hydrolase (227 aa).

One can recognise a UCH catalytic domain in the interval 3–224; the sequence is TWTPLESNPE…VRFTVLALTA (222 aa). Residue Cys-93 is the Nucleophile of the active site. His-164 serves as the catalytic Proton donor.

This sequence belongs to the peptidase C12 family.

The catalysed reaction is Thiol-dependent hydrolysis of ester, thioester, amide, peptide and isopeptide bonds formed by the C-terminal Gly of ubiquitin (a 76-residue protein attached to proteins as an intracellular targeting signal).. In terms of biological role, ubiquitin-protein hydrolase is involved both in the processing of ubiquitin precursors and of ubiquitinated proteins. This enzyme is a thiol protease that recognizes and hydrolyzes a peptide bond at the C-terminal glycine of ubiquitin. In Drosophila melanogaster (Fruit fly), this protein is Ubiquitin carboxyl-terminal hydrolase (Uch).